Reading from the N-terminus, the 486-residue chain is Cardiolipin synthase A (486 aa).

Transmembrane regions (helical) follow at residues 3 to 23 and 38 to 58; these read TFYTVVSWLVILGYWVLIAGV and MAWLLIIYILPLVGIIAYLSV. 2 PLD phosphodiesterase domains span residues 219 to 246 and 399 to 426; these read MDLRQHRKMVMIDNYIAYTGSMNMVDPR and EGGLLHTKSVLVDGELSLVGTVNLDMRS. Catalysis depends on residues His224, Lys226, Asp231, His404, Lys406, and Asp411.

The protein belongs to the phospholipase D family. Cardiolipin synthase subfamily. ClsA sub-subfamily.

It localises to the cell inner membrane. It carries out the reaction 2 a 1,2-diacyl-sn-glycero-3-phospho-(1'-sn-glycerol) = a cardiolipin + glycerol. In terms of biological role, catalyzes the reversible phosphatidyl group transfer from one phosphatidylglycerol molecule to another to form cardiolipin (CL) (diphosphatidylglycerol) and glycerol. The chain is Cardiolipin synthase A from Salmonella choleraesuis (strain SC-B67).